The chain runs to 63 residues: Potassium channel toxin Sp4 (63 aa).

The N-terminal stretch at 1 to 20 is a signal peptide; it reads MNKVHFALFLLVLTVLAVSG. Cystine bridges form between Cys31–Cys53, Cys38–Cys58, and Cys42–Cys60.

It belongs to the long chain scorpion toxin family. Class 2 subfamily. As to expression, expressed by the venom gland.

The protein localises to the secreted. Its function is as follows. This recombinant toxin selectively inhibits mouse voltage-gated potassium channel Kv1.3/KCNA3 (IC(50)=24.73 nM). In Scorpiops pococki (Scorpion), this protein is Potassium channel toxin Sp4.